Here is a 318-residue protein sequence, read N- to C-terminus: MSSFNTQNKNVLQTPIPAPTPQSQLKQFVIGGLAGMLSSAFTHPIDSLKVRMQLQGEGTGVGPKRGALKMLVHINQTEGFFTLYKGLSASLLRQATYTTTRFGLYDLIKDIVAKDDKPLPFTQKIMVGMLSGAGGAIVGTPADLTMVRMQADGKLPFNLRRNYKNVFDGIFRISKEEGIISLWKGCSPNLIRAMFMTAGQVSSYDQTKQLMLASGYFHDDIKTHLIASTTAAFVAAVATSPLDVIKTRIMNSPKTVTGELQYKGTFDCLSKTLRAEGFKAFYKGFNPYFMRLGPQTILTFIFVEQLNILWKKSQSYFK.

Solcar repeat units follow at residues 22–111 (QSQL…IKDI), 119–210 (LPFT…TKQL), and 219–309 (DDIK…LNIL). The next 6 membrane-spanning stretches (helical) occupy residues 28–48 (FVIGGLAGMLSSAFTHPIDSL), 79–99 (GFFTLYKGLSASLLRQATYTT), 125–145 (IMVGMLSGAGGAIVGTPADLT), 185–205 (GCSPNLIRAMFMTAGQVSSYD), 225–245 (LIASTTAAFVAAVATSPLDVI), and 281–301 (FYKGFNPYFMRLGPQTILTFI).

This sequence belongs to the mitochondrial carrier (TC 2.A.29) family.

It localises to the mitochondrion inner membrane. Mitochondrial solute carriers shuttle metabolites, nucleotides, and cofactors through the mitochondrial inner membrane. Catalyzes the transport of 2-oxoglutarate across the inner mitochondrial membrane in an electroneutral exchange for malate or other dicarboxylic acids, and plays an important role in several metabolic processes, including the malate-aspartate shuttle, the oxoglutarate/isocitrate shuttle, in gluconeogenesis from lactate, and in nitrogen metabolism. This chain is Probable mitochondrial 2-oxoglutarate/malate carrier protein (ucpC), found in Dictyostelium discoideum (Social amoeba).